A 428-amino-acid polypeptide reads, in one-letter code: Histidinol dehydrogenase (428 aa).

The NAD(+) site is built by Y127, Q185, and N208. Substrate is bound by residues S232, Q254, and H257. Q254 and H257 together coordinate Zn(2+). Residues E321 and H322 each act as proton acceptor in the active site. Substrate contacts are provided by H322, D355, E409, and H414. D355 contacts Zn(2+). H414 serves as a coordination point for Zn(2+).

Belongs to the histidinol dehydrogenase family. Zn(2+) is required as a cofactor.

The catalysed reaction is L-histidinol + 2 NAD(+) + H2O = L-histidine + 2 NADH + 3 H(+). It participates in amino-acid biosynthesis; L-histidine biosynthesis; L-histidine from 5-phospho-alpha-D-ribose 1-diphosphate: step 9/9. Its function is as follows. Catalyzes the sequential NAD-dependent oxidations of L-histidinol to L-histidinaldehyde and then to L-histidine. The protein is Histidinol dehydrogenase of Pasteurella multocida (strain Pm70).